We begin with the raw amino-acid sequence, 301 residues long: Putative phosphoenolpyruvate synthase regulatory protein (301 aa).

Residues Met1–Pro24 show a composition bias toward low complexity. A disordered region spans residues Met1–Gly27. Gly181 to Thr188 contacts ADP.

The protein belongs to the pyruvate, phosphate/water dikinase regulatory protein family. PSRP subfamily.

It catalyses the reaction [pyruvate, water dikinase] + ADP = [pyruvate, water dikinase]-phosphate + AMP + H(+). The catalysed reaction is [pyruvate, water dikinase]-phosphate + phosphate + H(+) = [pyruvate, water dikinase] + diphosphate. Bifunctional serine/threonine kinase and phosphorylase involved in the regulation of the phosphoenolpyruvate synthase (PEPS) by catalyzing its phosphorylation/dephosphorylation. This Cupriavidus pinatubonensis (strain JMP 134 / LMG 1197) (Cupriavidus necator (strain JMP 134)) protein is Putative phosphoenolpyruvate synthase regulatory protein.